Reading from the N-terminus, the 42-residue chain is Photosystem I reaction center subunit IX (42 aa).

The helical transmembrane segment at 7-27 (YLSTAPVLATLWFGFLAGLLI) threads the bilayer.

This sequence belongs to the PsaJ family.

It is found in the plastid. The protein resides in the chloroplast thylakoid membrane. In terms of biological role, may help in the organization of the PsaE and PsaF subunits. The sequence is that of Photosystem I reaction center subunit IX from Marchantia polymorpha (Common liverwort).